An 83-amino-acid polypeptide reads, in one-letter code: NAD(P)H-quinone oxidoreductase subunit L (83 aa).

A run of 2 helical transmembrane segments spans residues 17–37 and 53–73; these read VLLA…LALL and TAIY…APFI.

The protein belongs to the complex I NdhL subunit family. NDH-1 can be composed of about 15 different subunits; different subcomplexes with different compositions have been identified which probably have different functions.

It localises to the cellular thylakoid membrane. The catalysed reaction is a plastoquinone + NADH + (n+1) H(+)(in) = a plastoquinol + NAD(+) + n H(+)(out). The enzyme catalyses a plastoquinone + NADPH + (n+1) H(+)(in) = a plastoquinol + NADP(+) + n H(+)(out). In terms of biological role, NDH-1 shuttles electrons from an unknown electron donor, via FMN and iron-sulfur (Fe-S) centers, to quinones in the respiratory and/or the photosynthetic chain. The immediate electron acceptor for the enzyme in this species is believed to be plastoquinone. Couples the redox reaction to proton translocation, and thus conserves the redox energy in a proton gradient. Cyanobacterial NDH-1 also plays a role in inorganic carbon-concentration. The protein is NAD(P)H-quinone oxidoreductase subunit L of Synechococcus sp. (strain RCC307).